The chain runs to 531 residues: Peroxinectin A (531 aa).

A signal peptide spans 1 to 21 (MRLNLISFFIIFTILVSISNS). Residue Asn-62 is glycosylated (N-linked (GlcNAc...) asparagine). His-101 functions as the Proton acceptor in the catalytic mechanism. 2 N-linked (GlcNAc...) asparagine glycosylation sites follow: Asn-131 and Asn-338.

It belongs to the peroxidase family.

The protein localises to the secreted. It catalyses the reaction 2 a phenolic donor + H2O2 = 2 a phenolic radical donor + 2 H2O. This Dictyostelium discoideum (Social amoeba) protein is Peroxinectin A (poxA).